The chain runs to 615 residues: Ras association domain-containing protein 1 homolog (615 aa).

Disordered stretches follow at residues methionine 1–glutamine 29 and serine 69–glycine 89. The span at threonine 76–serine 87 shows a compositional bias: low complexity. The Phorbol-ester/DAG-type zinc-finger motif lies at asparagine 164–cysteine 214. The disordered stretch occupies residues proline 249–glycine 268. Over residues methionine 251–glycine 268 the composition is skewed to polar residues. In terms of domain architecture, Ras-associating spans lysine 396–threonine 496. Residues aspartate 498–arginine 545 enclose the SARAH domain.

Interacts with rab-39 (GTP-bound form). Interacts (via SARAH domain) with cst-1; the interaction is required for the phosphorylation of cst-1. Expressed in the pharynx, epithelial cells, ciliated neurons in the head, body wall muscles, hypodermis, vulva, gonadal sheath cells, tail hypodermis and in coelomocytes. In terms of tissue distribution, expressed in the pharynx, neurons and vulva.

The protein localises to the cytoplasm. It localises to the cytoskeleton. Functionally, involved in embryonic morphogenesis. Plays a role in the organization of apical filamentous actin in epithelial cells of the developing embryo. May play a role in let-60-mediated vulval development. May induce nuclear condensation. Positively regulates the oxidative stress response, and this may be in association with the small GTPase rab-39. Not required for muscle integrity. The protein is Ras association domain-containing protein 1 homolog of Caenorhabditis elegans.